Reading from the N-terminus, the 290-residue chain is Ribosomal RNA small subunit methyltransferase A (290 aa).

S-adenosyl-L-methionine-binding residues include Asn27, Leu29, Gly54, Glu75, Asp100, and Asn125.

It belongs to the class I-like SAM-binding methyltransferase superfamily. rRNA adenine N(6)-methyltransferase family. RsmA subfamily.

It localises to the cytoplasm. It catalyses the reaction adenosine(1518)/adenosine(1519) in 16S rRNA + 4 S-adenosyl-L-methionine = N(6)-dimethyladenosine(1518)/N(6)-dimethyladenosine(1519) in 16S rRNA + 4 S-adenosyl-L-homocysteine + 4 H(+). Specifically dimethylates two adjacent adenosines (A1518 and A1519) in the loop of a conserved hairpin near the 3'-end of 16S rRNA in the 30S particle. May play a critical role in biogenesis of 30S subunits. This chain is Ribosomal RNA small subunit methyltransferase A, found in Streptococcus pyogenes serotype M1.